A 169-amino-acid chain; its full sequence is Small ribosomal subunit protein uS5 (169 aa).

In terms of domain architecture, S5 DRBM spans 14–77 (MKEQVVDIRR…QAAKKNLLLV (64 aa)).

The protein belongs to the universal ribosomal protein uS5 family. In terms of assembly, part of the 30S ribosomal subunit. Contacts proteins S4 and S8.

In terms of biological role, with S4 and S12 plays an important role in translational accuracy. Located at the back of the 30S subunit body where it stabilizes the conformation of the head with respect to the body. The chain is Small ribosomal subunit protein uS5 from Alkaliphilus metalliredigens (strain QYMF).